A 103-amino-acid polypeptide reads, in one-letter code: Large ribosomal subunit protein bL21 (103 aa).

Belongs to the bacterial ribosomal protein bL21 family. Part of the 50S ribosomal subunit. Contacts protein L20.

Its function is as follows. This protein binds to 23S rRNA in the presence of protein L20. The polypeptide is Large ribosomal subunit protein bL21 (Kocuria rhizophila (strain ATCC 9341 / DSM 348 / NBRC 103217 / DC2201)).